The chain runs to 101 residues: NAD(P)H-quinone oxidoreductase subunit 4L, chloroplastic (101 aa).

Helical transmembrane passes span 2 to 22, 32 to 52, and 61 to 81; these read MLEH…YGLI, MCLE…SDLF, and IFSI…PAIV.

Belongs to the complex I subunit 4L family. As to quaternary structure, NDH is composed of at least 16 different subunits, 5 of which are encoded in the nucleus.

The protein localises to the plastid. The protein resides in the chloroplast thylakoid membrane. It catalyses the reaction a plastoquinone + NADH + (n+1) H(+)(in) = a plastoquinol + NAD(+) + n H(+)(out). The catalysed reaction is a plastoquinone + NADPH + (n+1) H(+)(in) = a plastoquinol + NADP(+) + n H(+)(out). In terms of biological role, NDH shuttles electrons from NAD(P)H:plastoquinone, via FMN and iron-sulfur (Fe-S) centers, to quinones in the photosynthetic chain and possibly in a chloroplast respiratory chain. The immediate electron acceptor for the enzyme in this species is believed to be plastoquinone. Couples the redox reaction to proton translocation, and thus conserves the redox energy in a proton gradient. This is NAD(P)H-quinone oxidoreductase subunit 4L, chloroplastic from Ceratophyllum demersum (Rigid hornwort).